Reading from the N-terminus, the 343-residue chain is Dihydroorotase (343 aa).

Residues histidine 13 and histidine 15 each coordinate Zn(2+). Substrate is bound by residues 15–17 (HLR) and asparagine 41. Zn(2+) is bound by residues lysine 99, histidine 136, and histidine 174. Lysine 99 bears the N6-carboxylysine mark. Histidine 136 contacts substrate. Leucine 219 is a binding site for substrate. Aspartate 247 serves as a coordination point for Zn(2+). Aspartate 247 is a catalytic residue. 2 residues coordinate substrate: histidine 251 and alanine 263.

Belongs to the metallo-dependent hydrolases superfamily. DHOase family. Class II DHOase subfamily. In terms of assembly, homodimer. It depends on Zn(2+) as a cofactor.

It catalyses the reaction (S)-dihydroorotate + H2O = N-carbamoyl-L-aspartate + H(+). It participates in pyrimidine metabolism; UMP biosynthesis via de novo pathway; (S)-dihydroorotate from bicarbonate: step 3/3. Its function is as follows. Catalyzes the reversible cyclization of carbamoyl aspartate to dihydroorotate. This Shewanella baltica (strain OS195) protein is Dihydroorotase.